A 190-amino-acid chain; its full sequence is Crossover junction endodeoxyribonuclease RuvC (190 aa).

Active-site residues include Asp8, Glu67, and Asp139. Mg(2+)-binding residues include Asp8, Glu67, and Asp139.

It belongs to the RuvC family. As to quaternary structure, homodimer which binds Holliday junction (HJ) DNA. The HJ becomes 2-fold symmetrical on binding to RuvC with unstacked arms; it has a different conformation from HJ DNA in complex with RuvA. In the full resolvosome a probable DNA-RuvA(4)-RuvB(12)-RuvC(2) complex forms which resolves the HJ. The cofactor is Mg(2+).

It is found in the cytoplasm. It carries out the reaction Endonucleolytic cleavage at a junction such as a reciprocal single-stranded crossover between two homologous DNA duplexes (Holliday junction).. Functionally, the RuvA-RuvB-RuvC complex processes Holliday junction (HJ) DNA during genetic recombination and DNA repair. Endonuclease that resolves HJ intermediates. Cleaves cruciform DNA by making single-stranded nicks across the HJ at symmetrical positions within the homologous arms, yielding a 5'-phosphate and a 3'-hydroxyl group; requires a central core of homology in the junction. The consensus cleavage sequence is 5'-(A/T)TT(C/G)-3'. Cleavage occurs on the 3'-side of the TT dinucleotide at the point of strand exchange. HJ branch migration catalyzed by RuvA-RuvB allows RuvC to scan DNA until it finds its consensus sequence, where it cleaves and resolves the cruciform DNA. The sequence is that of Crossover junction endodeoxyribonuclease RuvC from Haemophilus influenzae (strain ATCC 51907 / DSM 11121 / KW20 / Rd).